The following is a 223-amino-acid chain: Urease subunit alpha (223 aa).

The urease gamma stretch occupies residues M1 to N101. The urease beta stretch occupies residues D102–L223.

The protein in the N-terminal section; belongs to the urease gamma subunit family. This sequence in the C-terminal section; belongs to the urease beta subunit family. Heterohexamer of 3 UreA (alpha) and 3 UreB (beta) subunits.

Its subcellular location is the cytoplasm. It catalyses the reaction urea + 2 H2O + H(+) = hydrogencarbonate + 2 NH4(+). It functions in the pathway nitrogen metabolism; urea degradation; CO(2) and NH(3) from urea (urease route): step 1/1. This Campylobacter lari protein is Urease subunit alpha.